A 209-amino-acid chain; its full sequence is Tumor suppressor candidate gene 1 protein (209 aa).

Disordered stretches follow at residues 1 to 55, 111 to 157, and 172 to 209; these read MWRM…DGAR, ALRL…LRAR, and LHLEQRGPRPSGDKEEQPLQEPDSGLRSRDSEPSGPWL. The segment covering 14 to 47 has biased composition (gly residues); sequence CCGGDGAADGRGPGRSGRARGGGSPSGGGGGVGW. Positions 70–114 form a coiled coil; that stretch reads LEAIRARDEWDRQNARLRQENARLRLENRRLKRENRSLFRQALRL. The segment covering 125–149 has biased composition (basic and acidic residues); that stretch reads EARRVPEEASTNRRARDSGREDEPG. At Ser-150 the chain carries Phosphoserine. Residues 152–177 are a coiled coil; that stretch reads RALRARLEKLEAMYRRALLQLHLEQR. Residues 174 to 188 are compositionally biased toward basic and acidic residues; sequence LEQRGPRPSGDKEEQ.

In terms of tissue distribution, widely expressed at low level. Expressed at higher level in testis, weakly expressed in muscle, colon, lung and spleen. Not detected in 3 non small cell lung carcinoma (NSCLC) cell lines with homozygous deletion of the 9p region, while it is down-regulated in 3 other tumor cell lines.

The protein is Tumor suppressor candidate gene 1 protein (TUSC1) of Homo sapiens (Human).